Reading from the N-terminus, the 230-residue chain is Large ribosomal subunit protein uL1 (230 aa).

This sequence belongs to the universal ribosomal protein uL1 family. Part of the 50S ribosomal subunit.

Binds directly to 23S rRNA. The L1 stalk is quite mobile in the ribosome, and is involved in E site tRNA release. In terms of biological role, protein L1 is also a translational repressor protein, it controls the translation of the L11 operon by binding to its mRNA. This Bifidobacterium longum subsp. infantis (strain ATCC 15697 / DSM 20088 / JCM 1222 / NCTC 11817 / S12) protein is Large ribosomal subunit protein uL1.